The sequence spans 406 residues: CinA-like protein (406 aa).

This sequence belongs to the CinA family.

This is CinA-like protein from Thermomicrobium roseum (strain ATCC 27502 / DSM 5159 / P-2).